A 445-amino-acid chain; its full sequence is Lipid A 1-phosphatase (445 aa).

Positions 1–22 (MNRESFLLLLVLLFALPLHLQA) are cleaved as a signal peptide.

It is found in the periplasm. It functions in the pathway bacterial outer membrane biogenesis; LPS lipid A biosynthesis. Its function is as follows. Removes the 1-phosphate group from lipid A species. Absence of phosphate groups in lipid A renders the bacteria resistant to host-derived cationic antimicrobial peptides (CAMP) and allowing it to camouflage itself from the host innate immune response. In Porphyromonas gingivalis (strain ATCC 33277 / DSM 20709 / CIP 103683 / JCM 12257 / NCTC 11834 / 2561), this protein is Lipid A 1-phosphatase.